Reading from the N-terminus, the 1341-residue chain is DNA-directed RNA polymerase subunit beta (1341 aa).

This sequence belongs to the RNA polymerase beta chain family. As to quaternary structure, the RNAP catalytic core consists of 2 alpha, 1 beta, 1 beta' and 1 omega subunit. When a sigma factor is associated with the core the holoenzyme is formed, which can initiate transcription.

The enzyme catalyses RNA(n) + a ribonucleoside 5'-triphosphate = RNA(n+1) + diphosphate. In terms of biological role, DNA-dependent RNA polymerase catalyzes the transcription of DNA into RNA using the four ribonucleoside triphosphates as substrates. In Pseudoalteromonas translucida (strain TAC 125), this protein is DNA-directed RNA polymerase subunit beta.